Here is a 65-residue protein sequence, read N- to C-terminus: Large ribosomal subunit protein bL35 (65 aa).

Belongs to the bacterial ribosomal protein bL35 family.

The protein is Large ribosomal subunit protein bL35 of Caldicellulosiruptor bescii (strain ATCC BAA-1888 / DSM 6725 / KCTC 15123 / Z-1320) (Anaerocellum thermophilum).